The sequence spans 284 residues: L-ribulose-5-phosphate 3-epimerase UlaE (284 aa).

Belongs to the L-ribulose-5-phosphate 3-epimerase family.

It catalyses the reaction L-ribulose 5-phosphate = L-xylulose 5-phosphate. Its pathway is cofactor degradation; L-ascorbate degradation; D-xylulose 5-phosphate from L-ascorbate: step 3/4. Functionally, catalyzes the isomerization of L-xylulose-5-phosphate to L-ribulose-5-phosphate. Is involved in the anaerobic L-ascorbate utilization. The protein is L-ribulose-5-phosphate 3-epimerase UlaE of Salmonella typhimurium (strain LT2 / SGSC1412 / ATCC 700720).